Consider the following 239-residue polypeptide: Terpene cyclase idtB (239 aa).

The next 5 helical transmembrane spans lie at 20 to 40, 50 to 70, 75 to 95, 113 to 133, and 138 to 158; these read MADT…ALMI, CMAL…TIVY, RVEL…MVGA, AGFI…ALAM, and GLAY…GGLF. Residue N164 is glycosylated (N-linked (GlcNAc...) asparagine). A helical membrane pass occupies residues 197-217; the sequence is EVFGWLASPLVLWSLVTFLLA.

The protein belongs to the paxB family.

Its subcellular location is the membrane. It functions in the pathway secondary metabolite biosynthesis. Its function is as follows. Terpene cyclase; part of the gene cluster that mediates the biosynthesis of paspalitrems, indole-diterpene (IDT) mycotoxins that are potent tremorgens in mammals. The geranylgeranyl diphosphate (GGPP) synthase idtG is proposed to catalyze the first step in IDT biosynthesis via catalysis of a series of iterative condensations of isopentenyl diphosphate (IPP) with dimethylallyl diphosphate (DMAPP), geranyl diphosphate (GPP), and farnesyl diphosphate (FPP), to form GGPP. Condensation of indole-3-glycerol phosphate with GGPP by the prenyltransferase idtC then forms 3-geranylgeranylindole (3-GGI). Epoxidation of the two terminal alkenes of the geranylgeranyl moiety by the FAD-dependent monooxygenase idtM, and cyclization by the terpene cyclase idtB then leads to the production of paspaline. The cytochrome P450 monooxygenase idtP then catalyzes oxidative elimination of the pendant methyl group at C-12 of paspaline and generates the C-10 ketone to yield 13-desoxypaxilline. The cytochrome P450 monooxygenase idtQ may catalyze the C-13 oxidation of 13-desoxypaxilline to afford paxilline. Considering that both paspalicine and paxilline were detected in C.paspali, idtQ also catalyzes the formation of paspalinine from 13-desoxypaxilline via paspalicine as an intermediate. Finally, the alpha-prenyltransferase idtF prenylates paspalinine at the C-20 or the C-21 positions to yield paspalitrems A and C, respectively. The hydroxylation of paspalitrem A at C-32 by a still unknown oxidase affords paspalitrem B. The sequence is that of Terpene cyclase idtB from Claviceps paspali (Rye ergot fungus).